Reading from the N-terminus, the 493-residue chain is Leucine-rich repeat-containing protein 14 (493 aa).

The stretch at 111 to 146 is one LRR 1; degenerate repeat; the sequence is KHALRVLDMTGLLDDGVEQDPGTMSMWDCTAAVART. The stretch at 194-218 is one LRR 2; degenerate repeat; that stretch reads RLCCRDLRAEDLPMRNTVALLQLLD. The LRR 3; degenerate repeat unit spans residues 219–246; the sequence is AGCLRRVDLRFNNLGLRGLSVIIPHVAR. One copy of the LRR 4; degenerate repeat lies at 247-282; sequence FQHLASLRLHYVHGDSRQPSVDGEDNFRYFLAQMGR. LRR repeat units lie at residues 283–307, 308–339, 340–360, 364–391, and 392–416; these read FTCL…LSTL, QSPL…AHLK, KLDL…QGLL, AATL…ILTQ, and CASL…LLRD.

It belongs to the PRAME family. LRRC14 subfamily. Interacts with IKBKB; disrupts IKBKB-IKBKG interaction preventing I-kappa-B-kinase (IKK) core complex formation and leading to a decrease of IKBKB phosphorylation and NF-kappaB activation. Interacts with CHUK.

The protein resides in the cytoplasm. Negatively regulates Toll-like receptor-mediated NF-kappa-B signaling by disrupting IKK core complex formation through interaction with IKBKB. In Homo sapiens (Human), this protein is Leucine-rich repeat-containing protein 14.